The sequence spans 244 residues: Protein DMP9 (244 aa).

The tract at residues 1 to 56 (MEKTEESVGIRVYTATPPQKPSPSPPSRSPKPVLISSLPSLPSGAAAGGGRGRKRR) is disordered. The span at 18–29 (PQKPSPSPPSRS) shows a compositional bias: pro residues. Low complexity predominate over residues 30 to 45 (PKPVLISSLPSLPSGA). 4 helical membrane-spanning segments follow: residues 71–91 (MLVNFLPTGTLLMFEMVLPSI), 99–119 (GINTLMIHLLLLLCAMSCFFF), 173–193 (LTVNDFVHAVMSVLVFMAIAF), and 213–233 (VMESFPIMVGIVCSALFLVFP).

This sequence belongs to the plant DMP1 protein family. As to expression, restricted to flowers and pollen.

The protein resides in the endoplasmic reticulum membrane. It is found in the vacuole membrane. Its function is as follows. Involved in membrane remodeling. This is Protein DMP9 from Arabidopsis thaliana (Mouse-ear cress).